Reading from the N-terminus, the 520-residue chain is Cholesterol side-chain cleavage enzyme, mitochondrial (520 aa).

The transit peptide at M1–G39 directs the protein to the mitochondrion. Positions W27–P47 are disordered. Residue C461 coordinates heme.

This sequence belongs to the cytochrome P450 family. As to quaternary structure, interacts with FDX1/adrenodoxin. The cofactor is heme.

It localises to the mitochondrion inner membrane. The catalysed reaction is 6 reduced [adrenodoxin] + cholesterol + 3 O2 + 6 H(+) = 4-methylpentanal + pregnenolone + 6 oxidized [adrenodoxin] + 4 H2O. The enzyme catalyses 2 reduced [adrenodoxin] + cholesterol + O2 + 2 H(+) = (22R)-hydroxycholesterol + 2 oxidized [adrenodoxin] + H2O. It catalyses the reaction (22R)-hydroxycholesterol + 2 reduced [adrenodoxin] + O2 + 2 H(+) = (20R,22R)-20,22-dihydroxycholesterol + 2 oxidized [adrenodoxin] + H2O. It carries out the reaction (20R,22R)-20,22-dihydroxycholesterol + 2 reduced [adrenodoxin] + O2 + 2 H(+) = 4-methylpentanal + pregnenolone + 2 oxidized [adrenodoxin] + 2 H2O. Its pathway is lipid metabolism; C21-steroid hormone metabolism. It functions in the pathway steroid metabolism; cholesterol metabolism. Functionally, a cytochrome P450 monooxygenase that catalyzes the side-chain hydroxylation and cleavage of cholesterol to pregnenolone, the precursor of most steroid hormones. Catalyzes three sequential oxidation reactions of cholesterol, namely the hydroxylation at C22 followed with the hydroxylation at C20 to yield 20R,22R-hydroxycholesterol that is further cleaved between C20 and C22 to yield the C21-steroid pregnenolone and 4-methylpentanal. Mechanistically, uses molecular oxygen inserting one oxygen atom into a substrate and reducing the second into a water molecule. Two electrons are provided by NADPH via a two-protein mitochondrial transfer system comprising flavoprotein FDXR (adrenodoxin/ferredoxin reductase) and nonheme iron-sulfur protein FDX1 or FDX2 (adrenodoxin/ferredoxin). The polypeptide is Cholesterol side-chain cleavage enzyme, mitochondrial (Ovis aries (Sheep)).